The sequence spans 189 residues: Potassium-transporting ATPase KdpC subunit (189 aa).

Residues 6-26 traverse the membrane as a helical segment; sequence PAILMLIIFTILCGGIYPAVV.

This sequence belongs to the KdpC family. The system is composed of three essential subunits: KdpA, KdpB and KdpC.

The protein resides in the cell inner membrane. In terms of biological role, part of the high-affinity ATP-driven potassium transport (or Kdp) system, which catalyzes the hydrolysis of ATP coupled with the electrogenic transport of potassium into the cytoplasm. This subunit acts as a catalytic chaperone that increases the ATP-binding affinity of the ATP-hydrolyzing subunit KdpB by the formation of a transient KdpB/KdpC/ATP ternary complex. In Geobacter sulfurreducens (strain ATCC 51573 / DSM 12127 / PCA), this protein is Potassium-transporting ATPase KdpC subunit.